We begin with the raw amino-acid sequence, 467 residues long: 2-succinylbenzoate--CoA ligase (467 aa).

This sequence belongs to the ATP-dependent AMP-binding enzyme family. MenE subfamily.

The enzyme catalyses 2-succinylbenzoate + ATP + CoA = 2-succinylbenzoyl-CoA + AMP + diphosphate. It participates in quinol/quinone metabolism; 1,4-dihydroxy-2-naphthoate biosynthesis; 1,4-dihydroxy-2-naphthoate from chorismate: step 5/7. It functions in the pathway quinol/quinone metabolism; menaquinone biosynthesis. Its function is as follows. Converts 2-succinylbenzoate (OSB) to 2-succinylbenzoyl-CoA (OSB-CoA). This is 2-succinylbenzoate--CoA ligase from Listeria monocytogenes serotype 4b (strain F2365).